The sequence spans 106 residues: Small ribosomal subunit protein bS18 (106 aa).

A compositionally biased stretch (basic and acidic residues) spans 1 to 22 (MSEETTVRPERTERSERPERPQ). The segment at 1-34 (MSEETTVRPERTERSERPERPQYRGNGPRKRRPF) is disordered.

Belongs to the bacterial ribosomal protein bS18 family. As to quaternary structure, part of the 30S ribosomal subunit. Forms a tight heterodimer with protein bS6.

Binds as a heterodimer with protein bS6 to the central domain of the 16S rRNA, where it helps stabilize the platform of the 30S subunit. In Geobacter metallireducens (strain ATCC 53774 / DSM 7210 / GS-15), this protein is Small ribosomal subunit protein bS18.